Reading from the N-terminus, the 180-residue chain is ATP-dependent protease subunit HslV (180 aa).

T5 is an active-site residue. Na(+) is bound by residues G161, C164, and T167.

This sequence belongs to the peptidase T1B family. HslV subfamily. A double ring-shaped homohexamer of HslV is capped on each side by a ring-shaped HslU homohexamer. The assembly of the HslU/HslV complex is dependent on binding of ATP.

It localises to the cytoplasm. The enzyme catalyses ATP-dependent cleavage of peptide bonds with broad specificity.. With respect to regulation, allosterically activated by HslU binding. Its function is as follows. Protease subunit of a proteasome-like degradation complex believed to be a general protein degrading machinery. The protein is ATP-dependent protease subunit HslV of Campylobacter jejuni subsp. jejuni serotype O:2 (strain ATCC 700819 / NCTC 11168).